A 162-amino-acid chain; its full sequence is Photosystem II extrinsic protein V (162 aa).

Residues 1-26 (MLKRYMLLAVATVFFAFQVLTSTATA) form the signal peptide. Residues Cys62, Cys65, His66, and His117 each contribute to the heme c site.

This sequence belongs to the cytochrome c family. PsbV subfamily. PSII is composed of 1 copy each of membrane proteins PsbA, PsbB, PsbC, PsbD, PsbE, PsbF, PsbH, PsbI, PsbJ, PsbK, PsbL, PsbM, PsbT, PsbX, PsbY, PsbZ, Psb30/Ycf12, peripheral proteins PsbO, CyanoQ (PsbQ), PsbU, PsbV and a large number of cofactors. It forms dimeric complexes. Requires heme c as cofactor.

It is found in the cellular thylakoid membrane. In terms of biological role, one of the extrinsic, lumenal subunits of photosystem II (PSII). PSII is a light-driven water plastoquinone oxidoreductase, using light energy to abstract electrons from H(2)O, generating a proton gradient subsequently used for ATP formation. The extrinsic proteins stabilize the structure of photosystem II oxygen-evolving complex (OEC), the ion environment of oxygen evolution and protect the OEC against heat-induced inactivation. Low-potential cytochrome c that plays a role in the OEC of PSII. The chain is Photosystem II extrinsic protein V from Acaryochloris marina (strain MBIC 11017).